Here is a 140-residue protein sequence, read N- to C-terminus: Small ribosomal subunit protein uS12 (140 aa).

The segment at 1–44 is disordered; it reads MPTFNQLVRKGRKTMEKNSQAPALQKGFNSLRKKTTDASAPQKR. D102 carries the post-translational modification 3-methylthioaspartic acid. Residues 120–140 are disordered; it reads VAKRRQARSKYGAKRPKEAKK. Positions 121-140 are enriched in basic residues; the sequence is AKRRQARSKYGAKRPKEAKK.

It belongs to the universal ribosomal protein uS12 family. Part of the 30S ribosomal subunit. Contacts proteins S8 and S17. May interact with IF1 in the 30S initiation complex.

With S4 and S5 plays an important role in translational accuracy. Functionally, interacts with and stabilizes bases of the 16S rRNA that are involved in tRNA selection in the A site and with the mRNA backbone. Located at the interface of the 30S and 50S subunits, it traverses the body of the 30S subunit contacting proteins on the other side and probably holding the rRNA structure together. The combined cluster of proteins S8, S12 and S17 appears to hold together the shoulder and platform of the 30S subunit. This chain is Small ribosomal subunit protein uS12, found in Lachnoclostridium phytofermentans (strain ATCC 700394 / DSM 18823 / ISDg) (Clostridium phytofermentans).